We begin with the raw amino-acid sequence, 469 residues long: Putative dipeptidase SE_1424 (469 aa).

Residue H84 participates in Zn(2+) binding. D86 is a catalytic residue. D115 provides a ligand contact to Zn(2+). E149 functions as the Proton acceptor in the catalytic mechanism. E150, D173, and H440 together coordinate Zn(2+).

Belongs to the peptidase M20A family. The cofactor is Zn(2+).

The sequence is that of Putative dipeptidase SE_1424 from Staphylococcus epidermidis (strain ATCC 12228 / FDA PCI 1200).